A 196-amino-acid chain; its full sequence is ATP-dependent Clp protease proteolytic subunit (196 aa).

The Nucleophile role is filled by S96. Residue H121 is part of the active site.

It belongs to the peptidase S14 family. As to quaternary structure, fourteen ClpP subunits assemble into 2 heptameric rings which stack back to back to give a disk-like structure with a central cavity, resembling the structure of eukaryotic proteasomes.

It is found in the cytoplasm. The catalysed reaction is Hydrolysis of proteins to small peptides in the presence of ATP and magnesium. alpha-casein is the usual test substrate. In the absence of ATP, only oligopeptides shorter than five residues are hydrolyzed (such as succinyl-Leu-Tyr-|-NHMec, and Leu-Tyr-Leu-|-Tyr-Trp, in which cleavage of the -Tyr-|-Leu- and -Tyr-|-Trp bonds also occurs).. Functionally, cleaves peptides in various proteins in a process that requires ATP hydrolysis. Has a chymotrypsin-like activity. Plays a major role in the degradation of misfolded proteins. The protein is ATP-dependent Clp protease proteolytic subunit of Streptococcus pneumoniae (strain 70585).